Consider the following 384-residue polypeptide: 5-amino-6-(D-ribitylamino)uracil--L-tyrosine 4-hydroxyphenyl transferase 2 (384 aa).

In terms of domain architecture, Radical SAM core spans V53 to T286. [4Fe-4S] cluster-binding residues include C67, C71, and C74.

Belongs to the radical SAM superfamily. CofH family. As to quaternary structure, consists of two subunits, CofG and CofH. It depends on [4Fe-4S] cluster as a cofactor.

It carries out the reaction 5-amino-6-(D-ribitylamino)uracil + L-tyrosine + S-adenosyl-L-methionine = 5-amino-5-(4-hydroxybenzyl)-6-(D-ribitylimino)-5,6-dihydrouracil + 2-iminoacetate + 5'-deoxyadenosine + L-methionine + H(+). It functions in the pathway cofactor biosynthesis; coenzyme F0 biosynthesis. Catalyzes the radical-mediated synthesis of 5-amino-5-(4-hydroxybenzyl)-6-(D-ribitylimino)-5,6-dihydrouracil from 5-amino-6-(D-ribitylamino)uracil and L-tyrosine. The polypeptide is 5-amino-6-(D-ribitylamino)uracil--L-tyrosine 4-hydroxyphenyl transferase 2 (Methanosarcina mazei (strain ATCC BAA-159 / DSM 3647 / Goe1 / Go1 / JCM 11833 / OCM 88) (Methanosarcina frisia)).